We begin with the raw amino-acid sequence, 180 residues long: MTARLQEFYKEKVVPELIKQFGYKSVMEVPRITKITLNMGLGEAINDKKVIEHATGDLIKIAGQKPIVTKARKAIAGFKIRQGYPIGTMVTLRGQRMYEFLDRFITVSLPRVRDFRGVSGKAFDGRGNYNIGVKEQIIFPEIEYDKIDALRGLNISITTTAKNDEEAKALLNAFKFPFRN.

It belongs to the universal ribosomal protein uL5 family. As to quaternary structure, part of the 50S ribosomal subunit; part of the 5S rRNA/L5/L18/L25 subcomplex. Contacts the 5S rRNA and the P site tRNA. Forms a bridge to the 30S subunit in the 70S ribosome.

This is one of the proteins that bind and probably mediate the attachment of the 5S RNA into the large ribosomal subunit, where it forms part of the central protuberance. In the 70S ribosome it contacts protein S13 of the 30S subunit (bridge B1b), connecting the 2 subunits; this bridge is implicated in subunit movement. Contacts the P site tRNA; the 5S rRNA and some of its associated proteins might help stabilize positioning of ribosome-bound tRNAs. This Ralstonia pickettii (strain 12J) protein is Large ribosomal subunit protein uL5.